The chain runs to 435 residues: Adenylosuccinate synthetase (435 aa).

Residues 11-17 (GDEGKGK) and 39-41 (GHT) contribute to the GTP site. Asp-12 acts as the Proton acceptor in catalysis. 2 residues coordinate Mg(2+): Asp-12 and Gly-39. Residues 12-15 (DEGK), 37-40 (NAGH), Thr-134, Arg-148, Asn-230, Thr-245, and Arg-309 contribute to the IMP site. The Proton donor role is filled by His-40. Substrate is bound at residue 305-311 (VTTGRKR). GTP contacts are provided by residues Arg-311, 337 to 339 (KLD), and 419 to 421 (GTG).

It belongs to the adenylosuccinate synthetase family. As to quaternary structure, homodimer. Mg(2+) serves as cofactor.

It localises to the cytoplasm. It carries out the reaction IMP + L-aspartate + GTP = N(6)-(1,2-dicarboxyethyl)-AMP + GDP + phosphate + 2 H(+). The protein operates within purine metabolism; AMP biosynthesis via de novo pathway; AMP from IMP: step 1/2. Functionally, plays an important role in the de novo pathway and in the salvage pathway of purine nucleotide biosynthesis. Catalyzes the first committed step in the biosynthesis of AMP from IMP. This chain is Adenylosuccinate synthetase, found in Zygosaccharomyces rouxii (strain ATCC 2623 / CBS 732 / NBRC 1130 / NCYC 568 / NRRL Y-229).